A 231-amino-acid polypeptide reads, in one-letter code: Ribonuclease HII (231 aa).

In terms of domain architecture, RNase H type-2 spans 38 to 227; it reads ELVAGGDEAG…IKSFYGQLKL (190 aa). Residues Asp44, Glu45, and Asp136 each contribute to the a divalent metal cation site.

The protein belongs to the RNase HII family. It depends on Mn(2+) as a cofactor. The cofactor is Mg(2+).

It localises to the cytoplasm. The catalysed reaction is Endonucleolytic cleavage to 5'-phosphomonoester.. Functionally, endonuclease that specifically degrades the RNA of RNA-DNA hybrids. The chain is Ribonuclease HII from Carboxydothermus hydrogenoformans (strain ATCC BAA-161 / DSM 6008 / Z-2901).